The following is a 62-amino-acid chain: Large ribosomal subunit protein bL32 (62 aa).

The span at 1–16 (MAVPKRKTSPSRRGMR) shows a compositional bias: basic residues. Residues 1 to 44 (MAVPKRKTSPSRRGMRRSADALKAPTYVEDKDSGELRRPHHIDL) are disordered. The segment covering 28 to 44 (VEDKDSGELRRPHHIDL) has biased composition (basic and acidic residues).

It belongs to the bacterial ribosomal protein bL32 family.

This Methylorubrum extorquens (strain CM4 / NCIMB 13688) (Methylobacterium extorquens) protein is Large ribosomal subunit protein bL32.